The primary structure comprises 127 residues: MFSTLLAVFIGGGVGSVARWQLGVKFNNLYPTLPLGTLLANLIGAFVIGGALAFFLRHPHLDQDWKILITTGLCGGLTTFSTFSAEVIMFLQSGQLAAAGLHVLLNLAGSLLMTALAFALVTWVTTH.

A run of 4 helical transmembrane segments spans residues 4-24 (TLLA…QLGV), 35-55 (LGTL…LAFF), 71-91 (TGLC…IMFL), and 103-123 (VLLN…LVTW). Na(+)-binding residues include Gly-75 and Thr-78.

The protein belongs to the fluoride channel Fluc/FEX (TC 1.A.43) family.

Its subcellular location is the cell inner membrane. The catalysed reaction is fluoride(in) = fluoride(out). With respect to regulation, na(+) is not transported, but it plays an essential structural role and its presence is essential for fluoride channel function. Its function is as follows. Fluoride-specific ion channel. Important for reducing fluoride concentration in the cell, thus reducing its toxicity. The sequence is that of Fluoride-specific ion channel FluC from Pectobacterium carotovorum subsp. carotovorum (strain PC1).